A 146-amino-acid chain; its full sequence is Large ribosomal subunit protein uL15 (146 aa).

Residues 1–65 (MSDIQLNTLK…GQMPLQRRLP (65 aa)) form a disordered region. Residues 24–34 (RGIGSGLGKTA) show a composition bias toward gly residues.

It belongs to the universal ribosomal protein uL15 family. In terms of assembly, part of the 50S ribosomal subunit.

Functionally, binds to the 23S rRNA. The sequence is that of Large ribosomal subunit protein uL15 from Bordetella petrii (strain ATCC BAA-461 / DSM 12804 / CCUG 43448).